Reading from the N-terminus, the 163-residue chain is Phosphopantetheine adenylyltransferase (163 aa).

S9 provides a ligand contact to substrate. ATP contacts are provided by residues 9–10 and H17; that span reads SF. Residues K41, T73, and R87 each contribute to the substrate site. ATP is bound by residues 88-90, E98, and 123-129; these read GLR and YAYFSSS.

It belongs to the bacterial CoaD family. In terms of assembly, homohexamer. Mg(2+) serves as cofactor.

Its subcellular location is the cytoplasm. The catalysed reaction is (R)-4'-phosphopantetheine + ATP + H(+) = 3'-dephospho-CoA + diphosphate. The protein operates within cofactor biosynthesis; coenzyme A biosynthesis; CoA from (R)-pantothenate: step 4/5. Functionally, reversibly transfers an adenylyl group from ATP to 4'-phosphopantetheine, yielding dephospho-CoA (dPCoA) and pyrophosphate. In Lactiplantibacillus plantarum (strain ATCC BAA-793 / NCIMB 8826 / WCFS1) (Lactobacillus plantarum), this protein is Phosphopantetheine adenylyltransferase.